A 589-amino-acid chain; its full sequence is Carbonic anhydrase (589 aa).

2 consecutive Alpha-carbonic anhydrase domains span residues His59–Lys316 and Asp321–Asn585. Thr258–Thr259 contacts substrate. The segment at Met390 to Ala589 is catalytic. Positions 420, 422, and 440 each coordinate Zn(2+).

This sequence belongs to the alpha-carbonic anhydrase family. Zn(2+) is required as a cofactor.

The enzyme catalyses hydrogencarbonate + H(+) = CO2 + H2O. Functionally, reversible hydration of carbon dioxide. In Dunaliella salina (Green alga), this protein is Carbonic anhydrase (DCA).